The primary structure comprises 505 residues: Flagellin (505 aa).

It belongs to the bacterial flagellin family.

The protein resides in the secreted. Its subcellular location is the bacterial flagellum. Flagellin is the subunit protein which polymerizes to form the filaments of bacterial flagella. This Salmonella montevideo protein is Flagellin (fliC).